A 119-amino-acid polypeptide reads, in one-letter code: UPF0102 protein Nmul_A0195 (119 aa).

Belongs to the UPF0102 family.

The polypeptide is UPF0102 protein Nmul_A0195 (Nitrosospira multiformis (strain ATCC 25196 / NCIMB 11849 / C 71)).